Consider the following 123-residue polypeptide: Large ribosomal subunit protein bL12 (123 aa).

The protein belongs to the bacterial ribosomal protein bL12 family. Homodimer. Part of the ribosomal stalk of the 50S ribosomal subunit. Forms a multimeric L10(L12)X complex, where L10 forms an elongated spine to which 2 to 4 L12 dimers bind in a sequential fashion. Binds GTP-bound translation factors.

Functionally, forms part of the ribosomal stalk which helps the ribosome interact with GTP-bound translation factors. Is thus essential for accurate translation. The chain is Large ribosomal subunit protein bL12 from Rhodopseudomonas palustris (strain BisA53).